An 86-amino-acid chain; its full sequence is DNA-directed RNA polymerase subunit omega (86 aa).

The protein belongs to the RNA polymerase subunit omega family. As to quaternary structure, the RNAP catalytic core consists of 2 alpha, 1 beta, 1 beta' and 1 omega subunit. When a sigma factor is associated with the core the holoenzyme is formed, which can initiate transcription.

The enzyme catalyses RNA(n) + a ribonucleoside 5'-triphosphate = RNA(n+1) + diphosphate. Functionally, promotes RNA polymerase assembly. Latches the N- and C-terminal regions of the beta' subunit thereby facilitating its interaction with the beta and alpha subunits. The sequence is that of DNA-directed RNA polymerase subunit omega from Psychrobacter sp. (strain PRwf-1).